We begin with the raw amino-acid sequence, 453 residues long: MDVRGKRVLVVGLGKSGIASATFLQAQGAKVTVSDSKSEAQLRQEIPLLLDKGITVETGHHGERTFRDQDLIVISPGVPFDQPQLEQARKQGIPVIGEIELAAQFVPGHVIAITGSNGKTTTTSLCGDILQSGGKKTLVGGNIGTPAISFAQLANDDTWSVLEISSFQLETIERFRPEIAAILNITPDHLDRHGTFEKYAAAKERIFENQREHDFAILNADNEPCVEIAKRVKSQVLWFSRQHEVKHGTFVREDKIYFRDPKGEREIMPVADMLLKGAHNVENVLAAVCVGVAASVAPEQIRKAVSQFKAVEHRLEYTATVKGVDYYNDSKATNVDATIKALESFSKGVHLILGGKDKGSPYTVLNDLLHERAKTVYTIGAAAAKIEAEVKGVEVVHAETLENAVKLASQKAVKGDVVLLAPACASFDQFQSYEHRGRIFKELVRKMAEQEKK.

115 to 121 (GSNGKTT) is a binding site for ATP.

It belongs to the MurCDEF family.

The protein resides in the cytoplasm. The catalysed reaction is UDP-N-acetyl-alpha-D-muramoyl-L-alanine + D-glutamate + ATP = UDP-N-acetyl-alpha-D-muramoyl-L-alanyl-D-glutamate + ADP + phosphate + H(+). The protein operates within cell wall biogenesis; peptidoglycan biosynthesis. In terms of biological role, cell wall formation. Catalyzes the addition of glutamate to the nucleotide precursor UDP-N-acetylmuramoyl-L-alanine (UMA). The sequence is that of UDP-N-acetylmuramoylalanine--D-glutamate ligase from Koribacter versatilis (strain Ellin345).